Reading from the N-terminus, the 159-residue chain is Nutritionally-regulated adipose and cardiac-enriched protein homolog (159 aa).

The disordered stretch occupies residues 1–67; that stretch reads MKTAVHALSP…GDEPRRTTRH (67 aa). Basic and acidic residues-rich tracts occupy residues 12–25 and 50–63; these read SRPE…KNEE and SPQE…EPRR. The helical transmembrane segment at 107 to 124 threads the bilayer; it reads LTACILLALALGMCCGQA.

It localises to the cell membrane. The sequence is that of Nutritionally-regulated adipose and cardiac-enriched protein homolog (NRAC) from Bos taurus (Bovine).